We begin with the raw amino-acid sequence, 276 residues long: Undecaprenyl-diphosphatase (276 aa).

A run of 8 helical transmembrane segments spans residues 1 to 21 (MSWL…FLPV), 39 to 59 (AGAS…LIYF), 84 to 104 (YRLG…GLLF), 115 to 135 (LWLV…AEYY), 159 to 179 (LALM…LFLG), 188 to 208 (FGFL…LPDA), 222 to 242 (QLIV…AWFL), and 253 to 273 (FVGY…TGVL).

The protein belongs to the UppP family.

The protein resides in the cell membrane. It carries out the reaction di-trans,octa-cis-undecaprenyl diphosphate + H2O = di-trans,octa-cis-undecaprenyl phosphate + phosphate + H(+). Catalyzes the dephosphorylation of undecaprenyl diphosphate (UPP). Confers resistance to bacitracin. The chain is Undecaprenyl-diphosphatase from Mycolicibacterium smegmatis (strain ATCC 700084 / mc(2)155) (Mycobacterium smegmatis).